The sequence spans 198 residues: Recombination protein RecR (198 aa).

A C4-type zinc finger spans residues 57–72 (CQRCNTFSEAELCAIC). The 96-residue stretch at 80–175 (DQLCIVEMPA…TVTRIARGMP (96 aa)) folds into the Toprim domain.

Belongs to the RecR family.

May play a role in DNA repair. It seems to be involved in an RecBC-independent recombinational process of DNA repair. It may act with RecF and RecO. The protein is Recombination protein RecR of Chromobacterium violaceum (strain ATCC 12472 / DSM 30191 / JCM 1249 / CCUG 213 / NBRC 12614 / NCIMB 9131 / NCTC 9757 / MK).